The following is a 257-amino-acid chain: Zinc-finger homeodomain protein 6 (257 aa).

Residues 1–35 (MEFRGHDEPVDEMGVAYGRTPPSSSSSPAASASAG) form a disordered region. Positions 21–35 (PPSSSSSPAASASAG) are enriched in low complexity. The segment at 45–93 (YHECLRNHAAAMGGHVVDGCGEFMPMPGDAADALKCAACGCHRSFHRKD) adopts a ZF-HD dimerization-type; degenerate zinc-finger fold. Over residues 106–125 (PSPPTPRVPLLMPPPQPQPH) the composition is skewed to pro residues. 2 disordered regions span residues 106–182 (PSPP…TKFT) and 228–257 (NNKS…QQQQ). Low complexity predominate over residues 141–155 (YHHTPSGSGGTTTES). The segment at residues 174 to 237 (RKRFRTKFTP…NNKSSIGSSS (64 aa)) is a DNA-binding region (homeobox). Positions 242 to 257 (RRQPQEQQSQQQQQQQ) are enriched in low complexity.

In terms of assembly, homo- and heterodimer with other ZFHD proteins.

The protein resides in the nucleus. Its function is as follows. Putative transcription factor. The sequence is that of Zinc-finger homeodomain protein 6 (ZHD6) from Oryza sativa subsp. indica (Rice).